Here is a 907-residue protein sequence, read N- to C-terminus: Isoleucine--tRNA ligase (907 aa).

The 'HIGH' region motif lies at 57–67; the sequence is PFANGKAHMGS. Glutamate 549 is an L-isoleucyl-5'-AMP binding site. The 'KMSKS' region motif lies at 590 to 594; sequence KLSKS. Lysine 593 contacts ATP. Residues cysteine 867, cysteine 870, cysteine 889, and cysteine 892 each contribute to the Zn(2+) site.

This sequence belongs to the class-I aminoacyl-tRNA synthetase family. IleS type 1 subfamily. Monomer. Requires Zn(2+) as cofactor.

It localises to the cytoplasm. It carries out the reaction tRNA(Ile) + L-isoleucine + ATP = L-isoleucyl-tRNA(Ile) + AMP + diphosphate. Catalyzes the attachment of isoleucine to tRNA(Ile). As IleRS can inadvertently accommodate and process structurally similar amino acids such as valine, to avoid such errors it has two additional distinct tRNA(Ile)-dependent editing activities. One activity is designated as 'pretransfer' editing and involves the hydrolysis of activated Val-AMP. The other activity is designated 'posttransfer' editing and involves deacylation of mischarged Val-tRNA(Ile). This chain is Isoleucine--tRNA ligase, found in Methylacidiphilum infernorum (isolate V4) (Methylokorus infernorum (strain V4)).